The sequence spans 203 residues: Synaptosomal-associated protein 25-B (203 aa).

Residues 1–11 (MADEADMRNEL) are compositionally biased toward basic and acidic residues. A disordered region spans residues 1-25 (MADEADMRNELTDMQARADQLGDES). T-SNARE coiled-coil homology domains are found at residues 19–81 (DQLG…LTDL) and 137–199 (DARE…ATKM).

Belongs to the SNAP-25 family.

Its subcellular location is the synapse. The protein localises to the synaptosome. It localises to the cell membrane. Functionally, may play an important role in the synaptic function of specific neuronal systems. Associates with proteins involved in vesicle docking and membrane fusion. This chain is Synaptosomal-associated protein 25-B (snap25b), found in Carassius auratus (Goldfish).